The primary structure comprises 302 residues: Phytoene synthase (302 aa).

It belongs to the phytoene/squalene synthase family. ATP serves as cofactor. Requires Mn(2+) as cofactor. Mg(2+) is required as a cofactor.

It functions in the pathway carotenoid biosynthesis; phytoene biosynthesis. Functionally, involved in the biosynthesis of carotenoids. Catalyzes the condensation of two molecules of geranylgeranyl diphosphate (GGPP) to give prephytoene diphosphate (PPPP) and the subsequent rearrangement of the cyclopropylcarbinyl intermediate to yield phytoene. The polypeptide is Phytoene synthase (crtB) (Mycobacterium bovis (strain ATCC BAA-935 / AF2122/97)).